The chain runs to 87 residues: MTILSAITSITRPNKISKSVVSSNGGASLSLSSNSVACATACGGSSYSYSSSYSSSGLGYSYNSSYSSSVGYSSSVGVVIGSCGHCS.

It belongs to the hssA/B family.

The protein is HssA/B-like protein 28 (hssl28) of Dictyostelium discoideum (Social amoeba).